The chain runs to 190 residues: Crossover junction endodeoxyribonuclease RuvC (190 aa).

Active-site residues include Asp7, Glu68, and Asp141. Positions 7, 68, and 141 each coordinate Mg(2+).

Belongs to the RuvC family. Homodimer which binds Holliday junction (HJ) DNA. The HJ becomes 2-fold symmetrical on binding to RuvC with unstacked arms; it has a different conformation from HJ DNA in complex with RuvA. In the full resolvosome a probable DNA-RuvA(4)-RuvB(12)-RuvC(2) complex forms which resolves the HJ. Requires Mg(2+) as cofactor.

It localises to the cytoplasm. It carries out the reaction Endonucleolytic cleavage at a junction such as a reciprocal single-stranded crossover between two homologous DNA duplexes (Holliday junction).. Its function is as follows. The RuvA-RuvB-RuvC complex processes Holliday junction (HJ) DNA during genetic recombination and DNA repair. Endonuclease that resolves HJ intermediates. Cleaves cruciform DNA by making single-stranded nicks across the HJ at symmetrical positions within the homologous arms, yielding a 5'-phosphate and a 3'-hydroxyl group; requires a central core of homology in the junction. The consensus cleavage sequence is 5'-(A/T)TT(C/G)-3'. Cleavage occurs on the 3'-side of the TT dinucleotide at the point of strand exchange. HJ branch migration catalyzed by RuvA-RuvB allows RuvC to scan DNA until it finds its consensus sequence, where it cleaves and resolves the cruciform DNA. The chain is Crossover junction endodeoxyribonuclease RuvC from Endomicrobium trichonymphae.